A 79-amino-acid polypeptide reads, in one-letter code: Sulfur carrier protein TusA (79 aa).

C17 functions as the Cysteine persulfide intermediate in the catalytic mechanism.

It belongs to the sulfur carrier protein TusA family.

The protein localises to the cytoplasm. Sulfur carrier protein which probably makes part of a sulfur-relay system. This Actinobacillus pleuropneumoniae serotype 5b (strain L20) protein is Sulfur carrier protein TusA.